The primary structure comprises 307 residues: Leucine-rich repeat-containing protein 59 (307 aa).

At Met-1–Lys-247 the chain is on the cytoplasmic side. LRR repeat units follow at residues Asn-10–Pro-31, Lys-40–Leu-61, His-63–Leu-84, Asn-86–Leu-107, and Ser-109–Cys-131. Residues Glu-156–Glu-222 adopt a coiled-coil conformation. Positions Lys-170–Leu-238 are disordered. Basic and acidic residues-rich tracts occupy residues Glu-174–Met-187 and Gln-194–Leu-238. A helical transmembrane segment spans residues Ile-248–Phe-268. The Lumenal portion of the chain corresponds to Thr-269–Gln-307.

As to quaternary structure, interacts with SGO1.

It is found in the microsome membrane. Its subcellular location is the endoplasmic reticulum membrane. It localises to the nucleus envelope. Required for nuclear import of FGF1. The polypeptide is Leucine-rich repeat-containing protein 59 (lrrc59) (Xenopus laevis (African clawed frog)).